The sequence spans 197 residues: Ion-translocating oxidoreductase complex subunit B (197 aa).

Positions 1 to 26 (MSIVIIAVLALSALALTFGAVLGFAS) are hydrophobic. A 4Fe-4S domain is found at 32–90 (EGNPIVDQIDGLLPQTQCGQCGYPGCRPYAEAIANGDAINKCPPGGEATITALADLLDV). C49, C52, C57, C73, C115, C118, C121, C125, C145, C148, C151, and C155 together coordinate [4Fe-4S] cluster. 2 4Fe-4S ferredoxin-type domains span residues 106 to 135 (QVAY…GAAK) and 136 to 165 (QMHT…MIPA).

The protein belongs to the 4Fe4S bacterial-type ferredoxin family. RnfB subfamily. As to quaternary structure, the complex is composed of six subunits: RnfA, RnfB, RnfC, RnfD, RnfE and RnfG. Requires [4Fe-4S] cluster as cofactor.

It is found in the cell inner membrane. In terms of biological role, part of a membrane-bound complex that couples electron transfer with translocation of ions across the membrane. The polypeptide is Ion-translocating oxidoreductase complex subunit B (Hahella chejuensis (strain KCTC 2396)).